The chain runs to 38 residues: Large ribosomal subunit protein bL36 (38 aa).

This sequence belongs to the bacterial ribosomal protein bL36 family.

The polypeptide is Large ribosomal subunit protein bL36 (Buchnera aphidicola subsp. Cinara cedri (strain Cc)).